A 727-amino-acid polypeptide reads, in one-letter code: Elongation factor 2 (727 aa).

Residues 19 to 260 (DQIRNMGICA…MAITHLPNPL (242 aa)) form the tr-type G domain. GTP contacts are provided by residues 28–35 (AHIDHGKT), 94–98 (DTPGH), and 148–151 (NKVD). His-603 is modified (diphthamide).

Belongs to the TRAFAC class translation factor GTPase superfamily. Classic translation factor GTPase family. EF-G/EF-2 subfamily.

The protein localises to the cytoplasm. Its function is as follows. Catalyzes the GTP-dependent ribosomal translocation step during translation elongation. During this step, the ribosome changes from the pre-translocational (PRE) to the post-translocational (POST) state as the newly formed A-site-bound peptidyl-tRNA and P-site-bound deacylated tRNA move to the P and E sites, respectively. Catalyzes the coordinated movement of the two tRNA molecules, the mRNA and conformational changes in the ribosome. This is Elongation factor 2 from Methanococcus maripaludis (strain C6 / ATCC BAA-1332).